The sequence spans 608 residues: Bifunctional lycopene cyclase/phytoene synthase (608 aa).

The lycopene beta-cyclase stretch occupies residues 1 to 240; that stretch reads MSILTYLEFH…LVFATCAIDR (240 aa). 7 helical membrane passes run 3 to 23, 37 to 56, 80 to 97, 117 to 137, 150 to 170, 175 to 195, and 218 to 238; these read ILTY…ALCW, YKFL…NYIV, YMFF…SNFV, LLVR…AWHL, ILWY…EYIL, AVLL…IVAI, and VEEC…TCAI. The interval 247-608 is phytoene synthase; it reads LYKSSVQNQN…ARKIKSFFVD (362 aa).

The protein in the N-terminal section; belongs to the lycopene beta-cyclase family. This sequence in the C-terminal section; belongs to the phytoene/squalene synthase family.

It is found in the membrane. The catalysed reaction is all-trans-lycopene = gamma-carotene. It catalyses the reaction gamma-carotene = all-trans-beta-carotene. It carries out the reaction 2 (2E,6E,10E)-geranylgeranyl diphosphate = 15-cis-phytoene + 2 diphosphate. Its pathway is carotenoid biosynthesis; beta-carotene biosynthesis. It participates in carotenoid biosynthesis; phytoene biosynthesis; all-trans-phytoene from geranylgeranyl diphosphate: step 1/1. Functionally, bifunctional enzyme that catalyzes the reactions from geranylgeranyl diphosphate to phytoene (phytoene synthase) and lycopene to beta-carotene via the intermediate gamma-carotene (lycopene cyclase). This chain is Bifunctional lycopene cyclase/phytoene synthase, found in Blakeslea trispora (Choanephora trispora).